A 1588-amino-acid chain; its full sequence is MKLYVFLVNTGTTLTFDTELTVQTVADLKHAIQSKYKIAIQHQVLVVNGGECMAADRRVCTYSAGTDTNPIFLFNKEMILCDRAPAIPKATFSTENDMEIKVEESLMMPAVFHTVASRTQLAVEMYDVAKKLCSFCEGLVHDEHLQHQGWAAIMANLEDCSNSYQKLLFKFESIYSDYLQSIEDIKLKLTHLGTAVSVMAKIPLLECLTRHSYRECLGRPDSLNEHEGSEKAEMKRSTELVLSPDMPRTTNTSLVTSFHKSMEHVAPDPTGTERGKELRESCQSTVQQEEASVDAKDSDLPFFNVSLLDWINVQDRPNDVESLVRKCFDSMSRLDPKIIQPFMLECHQTIAKLDNQNMKAIKGLEDRLYALDQMIASCSRLVNEQKELAQGFLANQMRAENLKDASVLPDLCLSHANQLMIMLQNHRKLLDIKQKCTTAKQELANNLHVRLKWCCFVMLHADQDGEKLQALLRLVIELLERVRIVEALSTVPQMYCLAVVEVVRRKMFIKHYREWAGALVKDGKQLYEAEKSKRESFGKLFRKSFLRNRLFKGLDSWPSSFCTQKPRKFDCELPDISLKDLQFLQSFCPSEVQPFLRVPLLCDFEPLHQHVLALHNLVKAAQSLDEMSQTITDLLNEQKVSTSQASPQSAASPRIESTTGITTTTSPKTPPPLTVQDTLCPAVCPLEELSPDSIDAHTFDFETISHPNTEQPVHQASIDLDSLAESPESDFMSAVNEFVIEENLSSPNPISDPQSPEMMVESLYSSVINAIDSRRMQDTSTRGNEGFGDRAALHVQLEKCRAAAQDSHSSIQTIKDDLCHFRTFVQKEQCDLANYLKCTAVEIRNIIEKVKCSLEITLKEKHQQELQSLKIEYECKLDALVKDSEENVNKILKLKENLVSLEEALQNKDNEFTSIKHEKDAIVCVQQEKDQKLLEMEKIMHTQHCEIKELKQSREMALEDLKKLHDEKIESLRAEFQCLEQNHLKELEDTLHIRHTQEFEKVMTDHNMSLEKLKKENQQRIDQMLESHASTIQEKEQQLQELKLKVSDLSDMRCKLEVELALKEAETDEIKILLEESRTQQKEMLKSLLEQETENLRTEISKLNQKIHDNNESYQVGLSELRALMTIEKDQCISELISRHEEESNILKAELDNVTSLHRQAYEIEKKLKEQIVELQTRLNSELSALEKQKDEKITQQEEKYEALIQNLEKDKERLVKNHEQDKEHLIQELNFEKNKAVQTALDEFKVERELVEKELLEKVKHLENQIAKTPAFESAREDSSSLVAELQEKLQEEKAKFLEQLEEQEKRKNEEMQNVRTSLIAEQQTNFNTVLTREKMRKENIINDLSDKLKSTMQQQERDKDLIESLSEDRARLLEEKKQLEEEVSKLRTSSFLSSAPVAAAPELYGACAPELPGEPERSVMETADEGRLDSAMETSMMSVQENMLSEEKQRIMLLERTLQLKEEENKRLNQRLMSQSLSSVSSRHSEKIAIRDFQVGDLVLIILDERHDNYVLFTVSPTLYFLHSESLPALDLKPGEGASGASRRPWVLGKVMEKEYCQAKKAQNRFKVPLGTKFYRVKAVSWNKKV.

S222, S229, and S237 each carry phosphoserine. At T238 the chain carries Phosphothreonine. A phosphoserine mark is found at S243, S253, S257, and S261. Positions 565–568 (KPRK) match the Nuclear localization signal motif. 8 positions are modified to phosphoserine: S623, S646, S649, S652, S733, S1087, S1366, and S1478. A disordered region spans residues 638–674 (QKVSTSQASPQSAASPRIESTTGITTTTSPKTPPPLT). The span at 643–667 (SQASPQSAASPRIESTTGITTTTSP) shows a compositional bias: low complexity. The FFAT motif lies at 730–736 (DFMSAVN). Coiled-coil stretches lie at residues 858 to 1393 (LKEK…TSSF) and 1440 to 1479 (SVQENMLSEEKQRIMLLERTLQLKEEENKRLNQRLMSQSL).

Part of a complex containing ATG13/KIAA0652, ULK1 and RB1CC1. This complex associates with ATG101. Interacts with PTK2/FAK1 and PTK2B/PYK2. Interacts with GABARAP and GABARAPL1. Interacts with ATG16L1; the interaction is required for ULK1 complex-dependent autophagy. Interacts with RNF111, SKI and SMAD7. Interacts with COP1 in the cytoplasm of proliferating cells in response to UV stimulation. Interacts with TP53. Interacts with C9orf72. Interacts with WDR45B. Interacts with ATG13; this interaction is increased in the absence of TMEM39A. Interacts with WIPI2. Interacts with TAX1BP1. Interacts (via phosphorylated FFAT motif) with MOSPD2. In terms of processing, phosphorylation at Ser-733 of the FFAT motif activates interaction with MOSPD2. As to expression, expressed abundantly in heart and testis, and moderately in kidney, liver and skeletal muscles. Very low expression levels in lung and spleen. Colocalizes with RB1 in various tissues.

Its subcellular location is the nucleus. The protein resides in the cytoplasm. It is found in the cytosol. It localises to the preautophagosomal structure. The protein localises to the lysosome. Involved in autophagy. Regulates early events but also late events of autophagosome formation through direct interaction with Atg16L1. Required for the formation of the autophagosome-like double-membrane structure that surrounds the Salmonella-containing vacuole (SCV) during S.typhimurium infection and subsequent xenophagy. Involved in repair of DNA damage caused by ionizing radiation, which subsequently improves cell survival by decreasing apoptosis. Inhibits PTK2/FAK1 and PTK2B/PYK2 kinase activity, affecting their downstream signaling pathways. Plays a role as a modulator of TGF-beta-signaling by restricting substrate specificity of RNF111. Functions as a DNA-binding transcription factor. Is a potent regulator of the RB1 pathway through induction of RB1 expression. Plays a crucial role in muscular differentiation. Plays an indispensable role in fetal hematopoiesis and in the regulation of neuronal homeostasis. In Mus musculus (Mouse), this protein is RB1-inducible coiled-coil protein 1.